The chain runs to 473 residues: Adenosylhomocysteinase (473 aa).

Substrate-binding residues include threonine 64, aspartate 139, and glutamate 199. 200-202 is an NAD(+) binding site; the sequence is TTT. The substrate site is built by lysine 229 and aspartate 233. NAD(+)-binding positions include asparagine 234, 263-268, glutamate 286, asparagine 321, 342-344, and asparagine 387; these read GYGDVG and IGH.

The protein belongs to the adenosylhomocysteinase family. NAD(+) serves as cofactor.

The protein resides in the cytoplasm. It carries out the reaction S-adenosyl-L-homocysteine + H2O = L-homocysteine + adenosine. It functions in the pathway amino-acid biosynthesis; L-homocysteine biosynthesis; L-homocysteine from S-adenosyl-L-homocysteine: step 1/1. May play a key role in the regulation of the intracellular concentration of adenosylhomocysteine. The sequence is that of Adenosylhomocysteinase from Burkholderia thailandensis (strain ATCC 700388 / DSM 13276 / CCUG 48851 / CIP 106301 / E264).